Consider the following 208-residue polypeptide: FMN-dependent NADH:quinone oxidoreductase (208 aa).

Residues Ser9, 15-17 (SAS), 96-99 (MYNF), and 140-143 (TRGG) contribute to the FMN site.

This sequence belongs to the azoreductase type 1 family. In terms of assembly, homodimer. The cofactor is FMN.

It carries out the reaction 2 a quinone + NADH + H(+) = 2 a 1,4-benzosemiquinone + NAD(+). The enzyme catalyses N,N-dimethyl-1,4-phenylenediamine + anthranilate + 2 NAD(+) = 2-(4-dimethylaminophenyl)diazenylbenzoate + 2 NADH + 2 H(+). Functionally, quinone reductase that provides resistance to thiol-specific stress caused by electrophilic quinones. Its function is as follows. Also exhibits azoreductase activity. Catalyzes the reductive cleavage of the azo bond in aromatic azo compounds to the corresponding amines. The chain is FMN-dependent NADH:quinone oxidoreductase from Ralstonia nicotianae (strain ATCC BAA-1114 / GMI1000) (Ralstonia solanacearum).